A 428-amino-acid polypeptide reads, in one-letter code: Enolase (428 aa).

Gln162 serves as a coordination point for (2R)-2-phosphoglycerate. Glu204 serves as the catalytic Proton donor. Mg(2+)-binding residues include Asp241, Glu286, and Asp313. Residues Lys338, Arg367, Ser368, and Lys389 each coordinate (2R)-2-phosphoglycerate. The active-site Proton acceptor is Lys338.

This sequence belongs to the enolase family. As to quaternary structure, component of the RNA degradosome, a multiprotein complex involved in RNA processing and mRNA degradation. The cofactor is Mg(2+).

Its subcellular location is the cytoplasm. It is found in the secreted. It localises to the cell surface. It carries out the reaction (2R)-2-phosphoglycerate = phosphoenolpyruvate + H2O. The protein operates within carbohydrate degradation; glycolysis; pyruvate from D-glyceraldehyde 3-phosphate: step 4/5. Functionally, catalyzes the reversible conversion of 2-phosphoglycerate (2-PG) into phosphoenolpyruvate (PEP). It is essential for the degradation of carbohydrates via glycolysis. This Vesicomyosocius okutanii subsp. Calyptogena okutanii (strain HA) protein is Enolase.